Here is a 301-residue protein sequence, read N- to C-terminus: Probable actin-related protein 2/3 complex subunit 2 (301 aa).

Belongs to the ARPC2 family. Component of the Arp2/3 complex, at least composed of arx-1, arx-2, arx-4 and arx-6.

It localises to the cytoplasm. Its subcellular location is the cytoskeleton. Its function is as follows. Functions as actin-binding component of the Arp2/3 complex which is involved in regulation of actin polymerization and together with an activating nucleation-promoting factor (NPF) mediates the formation of branched actin networks. Seems to contact the mother actin filament. Plays a role in time-dependent memory loss and the retention of conditioned behavior over time. The sequence is that of Probable actin-related protein 2/3 complex subunit 2 from Caenorhabditis elegans.